Here is a 231-residue protein sequence, read N- to C-terminus: Elongation factor 1-delta 2 (231 aa).

N-acetylalanine is present on A2. Residues S11 to G73 enclose the GST C-terminal domain. Residues S82–K136 are disordered. Over residues A102–E118 the composition is skewed to acidic residues. Over residues E119–A129 the composition is skewed to basic and acidic residues.

This sequence belongs to the EF-1-beta/EF-1-delta family. In terms of assembly, EF-1 is composed of 4 subunits: alpha, beta (1B-alpha=beta'), delta (1B-beta), and gamma (1B-gamma).

Functionally, EF-1-beta and EF-1-delta stimulate the exchange of GDP bound to EF-1-alpha to GTP. The polypeptide is Elongation factor 1-delta 2 (Arabidopsis thaliana (Mouse-ear cress)).